The sequence spans 179 residues: Inner membrane-spanning protein YciB (179 aa).

The next 5 helical transmembrane spans lie at 22-42, 50-70, 76-96, 121-141, and 149-169; these read IYAA…YSWV, MALI…FFHN, WKVT…QWVM, LAWA…AFWL, and FKVF…GIYI.

This sequence belongs to the YciB family.

It is found in the cell inner membrane. Its function is as follows. Plays a role in cell envelope biogenesis, maintenance of cell envelope integrity and membrane homeostasis. The sequence is that of Inner membrane-spanning protein YciB from Klebsiella pneumoniae subsp. pneumoniae (strain ATCC 700721 / MGH 78578).